The primary structure comprises 514 residues: 2,3-bisphosphoglycerate-independent phosphoglycerate mutase (514 aa).

Residues D14 and S64 each coordinate Mn(2+). Catalysis depends on S64, which acts as the Phosphoserine intermediate. Substrate is bound by residues H125, 155 to 156 (RD), R187, R193, 263 to 266 (RADR), and K336. The Mn(2+) site is built by D403, H407, D444, H445, and H463.

The protein belongs to the BPG-independent phosphoglycerate mutase family. As to quaternary structure, monomer. The cofactor is Mn(2+).

The catalysed reaction is (2R)-2-phosphoglycerate = (2R)-3-phosphoglycerate. It functions in the pathway carbohydrate degradation; glycolysis; pyruvate from D-glyceraldehyde 3-phosphate: step 3/5. In terms of biological role, catalyzes the interconversion of 2-phosphoglycerate and 3-phosphoglycerate. This chain is 2,3-bisphosphoglycerate-independent phosphoglycerate mutase, found in Shewanella baltica (strain OS195).